We begin with the raw amino-acid sequence, 636 residues long: p-hydroxybenzoate-m-hydroxylase (636 aa).

Residues 11 to 40 (DIVI…HIDN), 242 to 244 (RLY), tyrosine 290, and aspartate 311 contribute to the FAD site. The helical transmembrane segment at 12–33 (IVIVGAGPVGILLSLCMSRWGY) threads the bilayer. A glycan (N-linked (GlcNAc...) asparagine) is linked at asparagine 573.

This sequence belongs to the PheA/TfdB FAD monooxygenase family. It depends on FAD as a cofactor.

The protein localises to the membrane. The enzyme catalyses 4-hydroxybenzoate + NADH + O2 + H(+) = 3,4-dihydroxybenzoate + NAD(+) + H2O. It catalyses the reaction 4-hydroxybenzoate + NADPH + O2 + H(+) = 3,4-dihydroxybenzoate + NADP(+) + H2O. Functionally, FAD-dependent monooxygenase; part of the benzoic acid degradation pathway also known as the protocatechuic acid pathway. Benzoic acid debradation begins with the conversion of benzoic acid into 4-hydroxybenzoic acid through hydroxylation by the benzoate-4-monooxygenase bphA, and its partner NADPH-cytochrome P450 reductase cprA which act as a mediator in electron donation from NADPH. 4-Hydroxybenzoic acid is then converted into 3,4-dihydroxybenzoic acid (also called protocatechuic acid) by the p-hydroxybenzoate-m-hydroxylase phhA. Protocatechuic acid is converted into 3-carboxy-cis,cis-muconic acid by the intradiol ring-cleavage dioxygenase prcA, which is further metabolized through the 3-oxoadipate pathway to finally enter the tricarboxylic acid cycle (TCA). The sequence is that of p-hydroxybenzoate-m-hydroxylase from Emericella nidulans (strain FGSC A4 / ATCC 38163 / CBS 112.46 / NRRL 194 / M139) (Aspergillus nidulans).